The primary structure comprises 467 residues: Coiled-coil domain-containing protein 174 (467 aa).

Disordered stretches follow at residues 40-77 (VFGK…EEQK) and 124-162 (EMEA…SEEW). A coiled-coil region spans residues 63-99 (NRAEKDAEQKIEEQKTLDKAREKLEEKAKLYEKMTKG). Basic and acidic residues-rich tracts occupy residues 64–77 (RAEK…EEQK) and 124–139 (EMEA…KAGE). A Phosphoserine modification is found at Ser197. Positions 267 to 309 (LEMLREQTTDQRTKRENIKEKRKAILEARLAKLRQKKMKKSKE) form a coiled coil. Disordered regions lie at residues 299–363 (LRQK…HIRE) and 378–453 (RQSD…TVTF). The segment covering 324–336 (PLPPEPEAVPTPR) has biased composition (pro residues). Composition is skewed to basic and acidic residues over residues 348-363 (VQER…HIRE) and 378-389 (RQSDLRAERDPE). Residues 425–437 (PDQSHGPSPEHTS) are compositionally biased toward polar residues. The segment covering 439 to 448 (TPAPDNPPQA) has biased composition (pro residues).

In terms of tissue distribution, widely expressed.

It is found in the nucleus. Its function is as follows. Probably involved in neuronal development. This chain is Coiled-coil domain-containing protein 174 (CCDC174), found in Homo sapiens (Human).